Reading from the N-terminus, the 347-residue chain is BSD domain-containing protein C22A12.14c (347 aa).

Phosphothreonine occurs at positions 123 and 125. In terms of domain architecture, BSD spans 167–219 (WEKEISIDGKTEEISLLLEEYPDLRKQMESLVPSEVSYDDFWKRFFWHKEVVQ). The disordered stretch occupies residues 229–347 (DEEEIFSWGD…DDDEDDDDWE (119 aa)). Residues Ser-235, Ser-241, and Ser-246 each carry the phosphoserine modification. The span at 240–251 (RSDEEESDNEQV) shows a compositional bias: acidic residues. Residues 297 to 312 (HDGEVDGEVKEEEENK) are compositionally biased toward basic and acidic residues. Residues 313–325 (VSSSSNIEASQSS) are compositionally biased toward low complexity. Over residues 327–337 (EVKDEANRKVD) the composition is skewed to basic and acidic residues. Residues 338-347 (DDDEDDDDWE) are compositionally biased toward acidic residues.

It is found in the cytoplasm. This Schizosaccharomyces pombe (strain 972 / ATCC 24843) (Fission yeast) protein is BSD domain-containing protein C22A12.14c.